Here is a 743-residue protein sequence, read N- to C-terminus: Sulfhydryl oxidase 1 (743 aa).

A signal peptide spans 1–42; the sequence is MWRRRARSGGGGGGGGGGAAPRCRWWPAVLALLAAALPAARS. The Thioredoxin domain occupies 43 to 166; that stretch reads RSLYSPSDPL…LRRAIITNLE (124 aa). Active-site nucleophile residues include cysteine 80 and cysteine 83. Intrachain disulfides connect cysteine 80-cysteine 83 and cysteine 111-cysteine 120. N-linked (GlcNAc...) asparagine glycosylation is found at asparagine 254, asparagine 288, asparagine 295, asparagine 371, and asparagine 401. The cysteines at positions 407 and 419 are disulfide-linked. The 104-residue stretch at 410 to 513 folds into the ERV/ALR sulfhydryl oxidase domain; sequence SEPHFRGYPC…EDPQFPKLQW (104 aa). FAD contacts are provided by residues arginine 415, tryptophan 422, histidine 426, glutamate 461, histidine 465, 488–495, lysine 510, and tryptophan 513; that span reads WSHHNEVN. A disulfide bridge links cysteine 459 with cysteine 462. Cysteines 519 and 522 form a disulfide. A disordered region spans residues 567-617; the sequence is ASARLSTAGLREKEEEERKEEEEEGEKETEKPHREGETGRPGSSELRRPSI. Positions 580–593 are enriched in acidic residues; the sequence is EEEERKEEEEEGEK. The span at 594–604 shows a compositional bias: basic and acidic residues; sequence ETEKPHREGET. Residues 707–727 form a helical membrane-spanning segment; the sequence is SLCIALYFLSSMCLLGMYTFF.

It belongs to the quiescin-sulfhydryl oxidase (QSOX) family. FAD is required as a cofactor. Post-translationally, N-glycosylated. O-glycosylated on Thr and Ser residues.

It is found in the golgi apparatus membrane. It localises to the secreted. It catalyses the reaction 2 R'C(R)SH + O2 = R'C(R)S-S(R)CR' + H2O2. Catalyzes the oxidation of sulfhydryl groups in peptide and protein thiols to disulfides with the reduction of oxygen to hydrogen peroxide. Plays a role in disulfide bond formation in a variety of extracellular proteins. In fibroblasts, required for normal incorporation of laminin into the extracellular matrix, and thereby for normal cell-cell adhesion and cell migration. The chain is Sulfhydryl oxidase 1 (QSOX1) from Gallus gallus (Chicken).